The primary structure comprises 249 residues: Undecaprenyl-diphosphatase (249 aa).

Helical transmembrane passes span 11 to 31 (GLTEFLPISSSGHLAIFTAIF), 35 to 55 (PDVGYFAFLHLATFLAVLIFV), 80 to 100 (LVLSTIPAVFVGLFFGDFIES), 101 to 121 (VFSSTYLIGIFLSITGILMLL), 135 to 155 (IPYFDALIVGVFQAFSVLPGI), 180 to 200 (FLMSLPVTFGAGILELHNVAF), 202 to 222 (TEQIFGFVISFLTGLLGLYLV), and 226 to 246 (VIGGKLKIFGYYCFLASFFVL).

The protein belongs to the UppP family.

It is found in the cell membrane. The enzyme catalyses di-trans,octa-cis-undecaprenyl diphosphate + H2O = di-trans,octa-cis-undecaprenyl phosphate + phosphate + H(+). Functionally, catalyzes the dephosphorylation of undecaprenyl diphosphate (UPP). The sequence is that of Undecaprenyl-diphosphatase from Methanococcus maripaludis (strain C7 / ATCC BAA-1331).